A 351-amino-acid chain; its full sequence is Rhodopsin (351 aa).

At 1–36 (MNGTEGPFFYIPMSNATGLVRSPYDYPQYYLVPPWG) the chain is on the extracellular side. N-linked (GlcNAc...) asparagine glycans are attached at residues N2 and N15. Residues 37-61 (YACLAAYMFLLILTGFPVNFLTLYV) form a helical membrane-spanning segment. Residues 62-73 (TIEHKKLRSPLN) are Cytoplasmic-facing. The helical transmembrane segment at 74–96 (YILLNLAVADLFMVIGGFTTTMW) threads the bilayer. Residues 97–110 (TSLNGYFVFGRMGC) lie on the Extracellular side of the membrane. Cysteines 110 and 187 form a disulfide. A helical membrane pass occupies residues 111 to 133 (NIEGFFATLGGEIALWSLVVLSM). A 'Ionic lock' involved in activated form stabilization motif is present at residues 134–136 (ERW). The Cytoplasmic portion of the chain corresponds to 134–152 (ERWIVVCKPISNFRFGENH). The helical transmembrane segment at 153–173 (AVMGVAFSWFMAAACAVPPLV) threads the bilayer. Over 174-202 (GWSRYIPEGMQCSCGIDYYTRAEGFNNES) the chain is Extracellular. N200 is a glycosylation site (N-linked (GlcNAc...) asparagine). Residues 203 to 224 (FVIYMFVVHFTCPLTIITFCYG) traverse the membrane as a helical segment. Residues 225 to 252 (RLVCTVKEAAAQQQESETTQRAEREVTR) lie on the Cytoplasmic side of the membrane. A helical membrane pass occupies residues 253 to 274 (MVIIMFVAFLACWVPYASVAWY). Residues 275 to 286 (IFTHQGSEFGPV) are Extracellular-facing. The helical transmembrane segment at 287 to 308 (FMTIPAFFAKSSAVYNPVIYIC) threads the bilayer. K296 carries the N6-(retinylidene)lysine modification. The Cytoplasmic portion of the chain corresponds to 309–351 (LNKQFRHCMITTLCCGKNPFEEEEGSTTASKTEASSVCSVSPA). 2 S-palmitoyl cysteine lipidation sites follow: C322 and C323. The disordered stretch occupies residues 330–351 (EEEGSTTASKTEASSVCSVSPA). Residues 334–351 (STTASKTEASSVCSVSPA) are compositionally biased toward polar residues.

The protein belongs to the G-protein coupled receptor 1 family. Opsin subfamily. Post-translationally, phosphorylated on some or all of the serine and threonine residues present in the C-terminal region. In terms of processing, contains one covalently linked retinal chromophore.

Its subcellular location is the membrane. It localises to the cell projection. The protein localises to the cilium. It is found in the photoreceptor outer segment. Photoreceptor required for image-forming vision at low light intensity. While most salt water fish species use retinal as chromophore, most freshwater fish use 3-dehydroretinal, or a mixture of retinal and 3-dehydroretinal. Light-induced isomerization of 11-cis to all-trans retinal triggers a conformational change that activates signaling via G-proteins. Subsequent receptor phosphorylation mediates displacement of the bound G-protein alpha subunit by arrestin and terminates signaling. The protein is Rhodopsin (rho) of Sardina pilchardus (European pilchard).